The primary structure comprises 299 residues: MHPIRSVLIVTKPGHPTALDLAQDIGVWLTRRGVSCRILEGPGEALPLRQLAADAGLVLVLGGDGTMLGVARRLAGTGVPLLGINLGRVGFLAEVPAGEWAATLERLLAAPLRVERRLALRFGVERGGVEIFQGDAVNDVVINRGALARVITLDIDVDGERLAGLRADGLIISTPTGATGYAVSARGPLMDPALDAFTVTPICPFLGNFPPLVLGGGSVCSVRIREQGTEVHATIDGQEGIALRSGDRITLTGLRDGLCFATLGGGGYCARLRACGFVRDHACTLPDMLPDEGGTSTDV.

Residue Asp64 is the Proton acceptor of the active site. Residues 64–65 (DG), 138–139 (ND), Arg149, Arg166, Asp168, 179–184 (TGYAVS), and Gln238 each bind NAD(+).

The protein belongs to the NAD kinase family. A divalent metal cation is required as a cofactor.

The protein resides in the cytoplasm. The enzyme catalyses NAD(+) + ATP = ADP + NADP(+) + H(+). Involved in the regulation of the intracellular balance of NAD and NADP, and is a key enzyme in the biosynthesis of NADP. Catalyzes specifically the phosphorylation on 2'-hydroxyl of the adenosine moiety of NAD to yield NADP. The polypeptide is NAD kinase (Nitratidesulfovibrio vulgaris (strain ATCC 29579 / DSM 644 / CCUG 34227 / NCIMB 8303 / VKM B-1760 / Hildenborough) (Desulfovibrio vulgaris)).